Reading from the N-terminus, the 124-residue chain is Small ribosomal subunit protein uS12 (124 aa).

Asp-89 carries the 3-methylthioaspartic acid modification.

It belongs to the universal ribosomal protein uS12 family. As to quaternary structure, part of the 30S ribosomal subunit. Contacts proteins S8 and S17. May interact with IF1 in the 30S initiation complex.

Its function is as follows. With S4 and S5 plays an important role in translational accuracy. In terms of biological role, interacts with and stabilizes bases of the 16S rRNA that are involved in tRNA selection in the A site and with the mRNA backbone. Located at the interface of the 30S and 50S subunits, it traverses the body of the 30S subunit contacting proteins on the other side and probably holding the rRNA structure together. The combined cluster of proteins S8, S12 and S17 appears to hold together the shoulder and platform of the 30S subunit. This chain is Small ribosomal subunit protein uS12, found in Blochmanniella floridana.